The primary structure comprises 160 residues: M-phase phosphoprotein 6 (160 aa).

Glycyl lysine isopeptide (Lys-Gly) (interchain with G-Cter in SUMO2) cross-links involve residues lysine 37 and lysine 86. Phosphoserine is present on serine 110. Residues 116-133 carry the Nuclear localization signal motif; the sequence is RRYETLVGTIGKKFARKR. A Glycyl lysine isopeptide (Lys-Gly) (interchain with G-Cter in SUMO2) cross-link involves residue lysine 127. Threonine 147 carries the phosphothreonine modification. Residues lysine 150 and lysine 153 each participate in a glycyl lysine isopeptide (Lys-Gly) (interchain with G-Cter in SUMO2) cross-link.

It belongs to the MPP6 family. In terms of assembly, associates with the RNA exosome complex, mediated by EXOSC3. Interacts with ARHGAP18. Interacts with exosome cofactors EXOSC10 and MTREX. In terms of processing, phosphorylated in M (mitotic) phase.

It localises to the nucleus. It is found in the nucleolus. Its subcellular location is the cytoplasm. In terms of biological role, RNA-binding protein that associates with the RNA exosome complex. Involved in the 3'-processing of the 7S pre-RNA to the mature 5.8S rRNA and play a role in recruiting the RNA exosome complex to pre-rRNA; this function may include C1D. In Homo sapiens (Human), this protein is M-phase phosphoprotein 6.